Consider the following 667-residue polypeptide: DNA ligase (667 aa).

Residues Asp-32–Asp-36, Ser-81–Leu-82, and Glu-110 contribute to the NAD(+) site. Lys-112 (N6-AMP-lysine intermediate) is an active-site residue. NAD(+) is bound by residues Arg-133, Glu-167, Lys-283, and Lys-307. Residues Cys-401, Cys-404, Cys-419, and Cys-424 each coordinate Zn(2+). The BRCT domain occupies Glu-586 to Ser-667.

The protein belongs to the NAD-dependent DNA ligase family. LigA subfamily. Requires Mg(2+) as cofactor. It depends on Mn(2+) as a cofactor.

The enzyme catalyses NAD(+) + (deoxyribonucleotide)n-3'-hydroxyl + 5'-phospho-(deoxyribonucleotide)m = (deoxyribonucleotide)n+m + AMP + beta-nicotinamide D-nucleotide.. Functionally, DNA ligase that catalyzes the formation of phosphodiester linkages between 5'-phosphoryl and 3'-hydroxyl groups in double-stranded DNA using NAD as a coenzyme and as the energy source for the reaction. It is essential for DNA replication and repair of damaged DNA. This Staphylococcus aureus (strain COL) protein is DNA ligase.